Here is a 205-residue protein sequence, read N- to C-terminus: Adenylyl-sulfate kinase (205 aa).

An ATP-binding site is contributed by G31 to S38. S105 acts as the Phosphoserine intermediate in catalysis.

It belongs to the APS kinase family.

The catalysed reaction is adenosine 5'-phosphosulfate + ATP = 3'-phosphoadenylyl sulfate + ADP + H(+). It functions in the pathway sulfur metabolism; hydrogen sulfide biosynthesis; sulfite from sulfate: step 2/3. Catalyzes the synthesis of activated sulfate. This is Adenylyl-sulfate kinase from Shewanella halifaxensis (strain HAW-EB4).